The following is a 348-amino-acid chain: Anthranilate phosphoribosyltransferase (348 aa).

5-phospho-alpha-D-ribose 1-diphosphate contacts are provided by residues glycine 89, glycine 92–aspartate 93, threonine 97, asparagine 99–threonine 102, lysine 117–serine 125, and serine 129. Glycine 89 contacts anthranilate. Serine 101 contacts Mg(2+). Residue asparagine 120 coordinates anthranilate. Arginine 175 is an anthranilate binding site. The Mg(2+) site is built by aspartate 233 and glutamate 234.

The protein belongs to the anthranilate phosphoribosyltransferase family. In terms of assembly, homodimer. Requires Mg(2+) as cofactor.

The catalysed reaction is N-(5-phospho-beta-D-ribosyl)anthranilate + diphosphate = 5-phospho-alpha-D-ribose 1-diphosphate + anthranilate. It functions in the pathway amino-acid biosynthesis; L-tryptophan biosynthesis; L-tryptophan from chorismate: step 2/5. Its function is as follows. Catalyzes the transfer of the phosphoribosyl group of 5-phosphorylribose-1-pyrophosphate (PRPP) to anthranilate to yield N-(5'-phosphoribosyl)-anthranilate (PRA). The protein is Anthranilate phosphoribosyltransferase of Shewanella putrefaciens (strain CN-32 / ATCC BAA-453).